The sequence spans 28 residues: Cyclotide vodo I2 (28 aa).

3 disulfides stabilise this stretch: Cys4–Cys18, Cys8–Cys20, and Cys13–Cys25.

Post-translationally, this is a cyclic peptide. In terms of processing, contains 3 disulfide bonds.

In terms of biological role, probably participates in a plant defense mechanism. The polypeptide is Cyclotide vodo I2 (Viola odorata (Sweet violet)).